We begin with the raw amino-acid sequence, 107 residues long: Protein TAP1 (107 aa).

The N-terminal stretch at 1–23 (MESKRVDVLVGLMLIMAIFGVHS) is a signal peptide.

As to expression, stamen.

The polypeptide is Protein TAP1 (TAP1) (Antirrhinum majus (Garden snapdragon)).